Consider the following 310-residue polypeptide: Thioesterase pytI (310 aa).

The next 2 helical transmembrane spans lie at 14–34 and 95–115; these read SLTP…YFAL and LLGG…IFVA. The segment at 168 to 195 is disordered; it reads TLSDDASTTTSSDNSRASTDHGADSEVE. Residues 170 to 184 are compositionally biased toward low complexity; that stretch reads SDDASTTTSSDNSRA.

This sequence belongs to the AMT4 thioesterase family.

The protein resides in the membrane. It participates in secondary metabolite biosynthesis. Functionally, thioesterase; part of the gene cluster that mediates the biosynthesis of pyranterreones, a family of antioxidative compounds. The first step of pyranonigrins biosynthesis is performed by the hybrid PKS-NRPS synthetase pytA that condenses 4 malonyl-CoA units ato the acetyl starter unit by the modular PKS of pytA. The acyl chain is then connected to an L-serine through the amide bond by the modular NRPS of pytA. A tetramic acid is formed and released from the PKS-NRPS pytA to give pyranterreone 5 with the help of the thioesterase pytI. Pyranterreone 5 could be methylated by pytC to afford pyranterreone 6. Both pyranterreones 5 and 6 are subsequently oxidized by the FAD-linked oxidoreductase pytB and the cytochrome P450 monooxygenase pytD to form the fused gamma-pyrone core, resulting in pyranterreones 7 and 11, respectively. The hydroxy group at C-8 of pyranterreones 7 and 11 are dehydrated by the aspartyl protease pytH to form a delta-7 double bond to give pyranterreones 3 and 1, 2 accordingly. The exo-methylene of pyranterreone 3 could be reduced into a pendant methyl by reductase pytE to provide pyranterreone 4, also known as cordylactam. Pyranterreone 4 can be reconverted to pyranterreone 3 through pytB-catalyzed dehydrogenation or further oxidized to pyranterreones 9 and 10. The protein is Thioesterase pytI of Aspergillus terreus.